Consider the following 275-residue polypeptide: Epidermal growth factor-like protein 7 (275 aa).

A signal peptide spans 1–21; it reads MWGSGELLVAWFLVLAADGTT. Residues 28-105 enclose the EMI domain; sequence SRRVCTVGIS…TSGLPGACGA (78 aa). Cystine bridges form between Cys-32-Cys-90, Cys-57-Cys-63, Cys-89-Cys-103, Cys-108-Cys-118, Cys-112-Cys-124, Cys-126-Cys-135, Cys-142-Cys-153, and Cys-149-Cys-162. The EGF-like 1 domain maps to 104–136; it reads GAAICQPPCGNGGSCIRPGHCRCPVGWQGDTCQ. Residues 131–133 carry the Cell attachment site motif; the sequence is QGD. Residues 138 to 178 form the EGF-like 2; calcium-binding domain; it reads DVDECSTGEASCPQRCVNTVGSYWCQGWEGQSPSADGTRCL. Residues 173–193 form a disordered region; that stretch reads DGTRCLSKEGPSPVAPNPTAG. A coiled-coil region spans residues 196 to 220; sequence SMAREEVYRLQARVDVLEQKLQLVL.

Interacts with ITGAV/ITGB3 in an RGD-dependent manner, increasing endothelial cell's motility. In terms of tissue distribution, expressed specifically by endothelial cells of the highly vascularized organs heart, lung and kidney.

The protein localises to the secreted. It is found in the extracellular space. Functionally, regulates vascular tubulogenesis in vivo. Inhibits platelet-derived growth factor (PDGF)-BB-induced smooth muscle cell migration and promotes endothelial cell adhesion to the extracellular matrix and angiogenesis. This is Epidermal growth factor-like protein 7 (Egfl7) from Mus musculus (Mouse).